The chain runs to 466 residues: Ribulose bisphosphate carboxylase large chain (466 aa).

Position 5 is an N6,N6,N6-trimethyllysine (Lys-5). Substrate contacts are provided by Asn-114 and Thr-164. Lys-166 serves as the catalytic Proton acceptor. Lys-168 contacts substrate. Residues Lys-192, Asp-194, and Glu-195 each contribute to the Mg(2+) site. At Lys-192 the chain carries N6-carboxylysine. His-285 (proton acceptor) is an active-site residue. 3 residues coordinate substrate: Arg-286, His-318, and Ser-370.

The protein belongs to the RuBisCO large chain family. Type I subfamily. In terms of assembly, heterohexadecamer of 8 large chains and 8 small chains. It depends on Mg(2+) as a cofactor.

The protein localises to the plastid. It is found in the chloroplast. The enzyme catalyses 2 (2R)-3-phosphoglycerate + 2 H(+) = D-ribulose 1,5-bisphosphate + CO2 + H2O. The catalysed reaction is D-ribulose 1,5-bisphosphate + O2 = 2-phosphoglycolate + (2R)-3-phosphoglycerate + 2 H(+). RuBisCO catalyzes two reactions: the carboxylation of D-ribulose 1,5-bisphosphate, the primary event in carbon dioxide fixation, as well as the oxidative fragmentation of the pentose substrate in the photorespiration process. Both reactions occur simultaneously and in competition at the same active site. This is Ribulose bisphosphate carboxylase large chain from Cornus kousa (Kousa dogwood).